The sequence spans 563 residues: Eukaryotic translation initiation factor 3 subunit D-1 (563 aa).

Residues 98–167 (VQKPPHQRGR…GPPPKMRESS (70 aa)) are disordered. Residues 100–121 (KPPHQRGRFRNMRNSRSGRGRN) are compositionally biased toward basic residues. Thr-128 carries the phosphothreonine modification. The RNA gate stretch occupies residues 291–305 (EFDLLTVNETSVEPP).

The protein belongs to the eIF-3 subunit D family. In terms of assembly, component of the eukaryotic translation initiation factor 3 (eIF-3) complex. The eIF-3 complex interacts with pix.

It is found in the cytoplasm. In terms of biological role, mRNA cap-binding component of the eukaryotic translation initiation factor 3 (eIF-3) complex, which is involved in protein synthesis of a specialized repertoire of mRNAs and, together with other initiation factors, stimulates binding of mRNA and methionyl-tRNAi to the 40S ribosome. The eIF-3 complex specifically targets and initiates translation of a subset of mRNAs involved in cell proliferation. In the eIF-3 complex, eif3d specifically recognizes and binds the 7-methylguanosine cap of a subset of mRNAs. This chain is Eukaryotic translation initiation factor 3 subunit D-1, found in Drosophila virilis (Fruit fly).